A 166-amino-acid polypeptide reads, in one-letter code: Ribosome-binding factor A (166 aa).

The disordered stretch occupies residues 119–166; the sequence is VQAQAKSGVYAGDEDPYVKPRVIGEDEDEDDEDGDDIDRSAPGYEPAH. The segment covering 143–154 has biased composition (acidic residues); the sequence is EDEDEDDEDGDD.

This sequence belongs to the RbfA family. As to quaternary structure, monomer. Binds 30S ribosomal subunits, but not 50S ribosomal subunits or 70S ribosomes.

Its subcellular location is the cytoplasm. One of several proteins that assist in the late maturation steps of the functional core of the 30S ribosomal subunit. Associates with free 30S ribosomal subunits (but not with 30S subunits that are part of 70S ribosomes or polysomes). Required for efficient processing of 16S rRNA. May interact with the 5'-terminal helix region of 16S rRNA. This chain is Ribosome-binding factor A, found in Clavibacter michiganensis subsp. michiganensis (strain NCPPB 382).